We begin with the raw amino-acid sequence, 685 residues long: Translation initiation factor IF-2 (685 aa).

Positions Ile-60 to Pro-79 are disordered. The segment covering Lys-64–Pro-79 has biased composition (basic and acidic residues). The 178-residue stretch at Asn-175 to Val-352 folds into the tr-type G domain. Positions Gly-184–Thr-191 are G1. Gly-184 to Thr-191 contacts GTP. The tract at residues Gly-209 to Ser-213 is G2. The segment at Asp-230–Gly-233 is G3. Residues Asp-230–His-234 and Asn-284–Asp-287 each bind GTP. Residues Asn-284 to Asp-287 are G4. The tract at residues Ser-321–Arg-323 is G5.

This sequence belongs to the TRAFAC class translation factor GTPase superfamily. Classic translation factor GTPase family. IF-2 subfamily.

The protein resides in the cytoplasm. Its function is as follows. One of the essential components for the initiation of protein synthesis. Protects formylmethionyl-tRNA from spontaneous hydrolysis and promotes its binding to the 30S ribosomal subunits. Also involved in the hydrolysis of GTP during the formation of the 70S ribosomal complex. This is Translation initiation factor IF-2 from Fervidobacterium nodosum (strain ATCC 35602 / DSM 5306 / Rt17-B1).